Reading from the N-terminus, the 731-residue chain is NADH-ubiquinone oxidoreductase 75 kDa subunit, mitochondrial (731 aa).

Residues 1 to 27 (MIRAPLVKALGALGSPTHQMASRAVRT) constitute a mitochondrion transit peptide. The 2Fe-2S ferredoxin-type domain maps to 40-118 (EKIEVFVDDI…GWRIKTNSDL (79 aa)). Positions 74, 85, 88, and 102 each coordinate [2Fe-2S] cluster. In terms of domain architecture, 4Fe-4S His(Cys)3-ligated-type spans 118–157 (LTRKAREGVMEFLLMNHPLDCPICDQGGECDLQDQAMAFG). The [4Fe-4S] cluster site is built by His-134, Cys-138, Cys-141, Cys-147, Cys-190, Cys-193, Cys-196, and Cys-240. Residues 259–315 (IRKVSSIDVLDAVGSNIVVSTRTNEVLRILPRENEDVNEEWLADKSRFACDGLKRQR) form the 4Fe-4S Mo/W bis-MGD-type domain.

Belongs to the complex I 75 kDa subunit family. As to quaternary structure, complex I is composed of about 45 different subunits. Requires [2Fe-2S] cluster as cofactor. [4Fe-4S] cluster is required as a cofactor.

It is found in the mitochondrion inner membrane. It catalyses the reaction a ubiquinone + NADH + 5 H(+)(in) = a ubiquinol + NAD(+) + 4 H(+)(out). Core subunit of the mitochondrial membrane respiratory chain NADH dehydrogenase (Complex I) that is believed to belong to the minimal assembly required for catalysis. Complex I functions in the transfer of electrons from NADH to the respiratory chain. The immediate electron acceptor for the enzyme is believed to be ubiquinone. This is the largest subunit of complex I and it is a component of the iron-sulfur (IP) fragment of the enzyme. It may form part of the active site crevice where NADH is oxidized. This is NADH-ubiquinone oxidoreductase 75 kDa subunit, mitochondrial from Drosophila melanogaster (Fruit fly).